A 58-amino-acid polypeptide reads, in one-letter code: Sperm protamine P2 (58 aa).

A disordered region spans residues 1-58 (RRRRRRGKGRGKKRKGKGKKRGKGRRRGSKGRKKKKGKGKKRKRRRRRRRKGSKGKGK).

In terms of tissue distribution, gonads.

It is found in the nucleus. The protein resides in the chromosome. In terms of biological role, protamines substitute for histones in the chromatin of sperm during the haploid phase of spermatogenesis. They compact sperm DNA into a highly condensed, stable and inactive complex. The polypeptide is Sperm protamine P2 (Bolinus brandaris (Purple dye murex)).